The following is a 529-amino-acid chain: Glycerol kinase 5 (529 aa).

Ser-28 and Ser-29 together coordinate ATP. 3 residues coordinate glycerol: Arg-98, Asp-275, and Gln-276. The ATP site is built by Thr-297, Gly-340, and Gly-440.

It belongs to the FGGY kinase family.

The protein localises to the cytoplasm. The catalysed reaction is glycerol + ATP = sn-glycerol 3-phosphate + ADP + H(+). Its pathway is polyol metabolism; glycerol degradation via glycerol kinase pathway; sn-glycerol 3-phosphate from glycerol: step 1/1. Its function is as follows. Skin-specific kinase that plays a key role in glycerol metabolism, catalyzing its phosphorylation to produce sn-glycerol 3-phosphate. Involved in skin-specific regulation of sterol regulatory element-binding protein (SREBP) processing and lipid biosynthesis. The sequence is that of Glycerol kinase 5 from Homo sapiens (Human).